Here is a 254-residue protein sequence, read N- to C-terminus: uncharacterized protein (254 aa).

It belongs to the nucleoside-specific channel-forming outer membrane porin (Tsx) (TC 1.B.10) family.

This is an uncharacterized protein from Escherichia coli (strain K12).